Consider the following 330-residue polypeptide: Ribosomal RNA small subunit methyltransferase H (330 aa).

S-adenosyl-L-methionine-binding positions include 35–37 (GGY), D53, F80, D101, and Q108.

It belongs to the methyltransferase superfamily. RsmH family.

Its subcellular location is the cytoplasm. The enzyme catalyses cytidine(1402) in 16S rRNA + S-adenosyl-L-methionine = N(4)-methylcytidine(1402) in 16S rRNA + S-adenosyl-L-homocysteine + H(+). In terms of biological role, specifically methylates the N4 position of cytidine in position 1402 (C1402) of 16S rRNA. The protein is Ribosomal RNA small subunit methyltransferase H of Rhodopseudomonas palustris (strain BisB18).